We begin with the raw amino-acid sequence, 71 residues long: uncharacterized protein (71 aa).

The protein localises to the mitochondrion matrix. The protein resides in the kinetoplast. This is an uncharacterized protein from Trypanosoma brucei brucei.